The sequence spans 297 residues: Cyclin-dependent kinase 1 (297 aa).

In terms of domain architecture, Protein kinase spans 4–287; sequence FEKIEKIGEG…AKDILEHPYF (284 aa). ATP is bound by residues 10–18 and Lys-33; that span reads IGEGTYGVV. Position 14 is a phosphothreonine (Thr-14). Residue Tyr-15 is modified to Phosphotyrosine. Asp-128 functions as the Proton acceptor in the catalytic mechanism. Tyr-160 bears the Phosphotyrosine mark. The residue at position 161 (Thr-161) is a Phosphothreonine; by CAK.

It belongs to the protein kinase superfamily. CMGC Ser/Thr protein kinase family. CDC2/CDKX subfamily. Forms a stable but non-covalent complex with a regulatory subunit and with a cyclin. Component of the Frs-CycA-Cdk1 complex composed of Cdk1, CycA and Z600.

The protein localises to the nucleus. The enzyme catalyses L-seryl-[protein] + ATP = O-phospho-L-seryl-[protein] + ADP + H(+). The catalysed reaction is L-threonyl-[protein] + ATP = O-phospho-L-threonyl-[protein] + ADP + H(+). It catalyses the reaction [DNA-directed RNA polymerase] + ATP = phospho-[DNA-directed RNA polymerase] + ADP + H(+). Its activity is regulated as follows. Phosphorylation at Thr-14 or Tyr-15 inactivates the enzyme, while phosphorylation at Thr-161 activates it. Functionally, plays a key role in the control of the eukaryotic cell cycle. Required for entry into S-phase and mitosis. In embryos, promotes the release of Rif1 from chromatin during mid-blastula transition. p34 is a component of the kinase complex that phosphorylates the repetitive C-terminus of RNA polymerase II. The protein is Cyclin-dependent kinase 1 of Drosophila melanogaster (Fruit fly).